A 139-amino-acid chain; its full sequence is Large ribosomal subunit protein uL13c (139 aa).

The protein belongs to the universal ribosomal protein uL13 family. As to quaternary structure, part of the 50S ribosomal subunit.

Its subcellular location is the plastid. It localises to the chloroplast. The sequence is that of Large ribosomal subunit protein uL13c from Trieres chinensis (Marine centric diatom).